Consider the following 393-residue polypeptide: DNA-directed RNA polymerase subunit Rpo1C (393 aa).

Belongs to the RNA polymerase beta' chain family. Part of the RNA polymerase complex.

It is found in the cytoplasm. The catalysed reaction is RNA(n) + a ribonucleoside 5'-triphosphate = RNA(n+1) + diphosphate. DNA-dependent RNA polymerase (RNAP) catalyzes the transcription of DNA into RNA using the four ribonucleoside triphosphates as substrates. Forms part of the jaw domain. The chain is DNA-directed RNA polymerase subunit Rpo1C from Halococcus morrhuae (Micrococcus morrhuae).